Consider the following 274-residue polypeptide: Glutamate racemase (274 aa).

Substrate is bound by residues 9 to 10 (DS) and 41 to 42 (YG). The active-site Proton donor/acceptor is C73. Residue 74–75 (NT) participates in substrate binding. C183 (proton donor/acceptor) is an active-site residue. Substrate is bound at residue 184–185 (TH).

The protein belongs to the aspartate/glutamate racemases family.

The enzyme catalyses L-glutamate = D-glutamate. It functions in the pathway cell wall biogenesis; peptidoglycan biosynthesis. In terms of biological role, provides the (R)-glutamate required for cell wall biosynthesis. The chain is Glutamate racemase from Shewanella baltica (strain OS185).